Here is a 438-residue protein sequence, read N- to C-terminus: Glutamyl-tRNA reductase (438 aa).

Residues 49 to 52, S109, 114 to 116, and Q120 each bind substrate; these read TCNR and EGQ. The Nucleophile role is filled by C50. NADP(+) is bound at residue 198 to 203; the sequence is GAGRMS.

This sequence belongs to the glutamyl-tRNA reductase family. As to quaternary structure, homodimer.

The catalysed reaction is (S)-4-amino-5-oxopentanoate + tRNA(Glu) + NADP(+) = L-glutamyl-tRNA(Glu) + NADPH + H(+). Its pathway is porphyrin-containing compound metabolism; protoporphyrin-IX biosynthesis; 5-aminolevulinate from L-glutamyl-tRNA(Glu): step 1/2. The protein operates within porphyrin-containing compound metabolism; chlorophyll biosynthesis. Functionally, catalyzes the NADPH-dependent reduction of glutamyl-tRNA(Glu) to glutamate 1-semialdehyde (GSA). The sequence is that of Glutamyl-tRNA reductase from Synechococcus sp. (strain WH7803).